The chain runs to 202 residues: MMTVEVFSVIILVLLFLILALTLLFVLLNKRTRSFVIRTFTGLFRSKHTTSQKNFYDNLTSTLLRLSTDKIGAIIAIENQDSLESYVNIGYRVTSDFSPELLVTIFYNKQSPLHDGAVIVRDYQIVSVSSYFPMTRQLIDVSYGSRHRSALGLTEKCDAIVFIVSETTGKISVAVRGVIKTLSSNSDRLQDQIIHYLTVKPG.

The helical transmembrane segment at 6 to 26 (VFSVIILVLLFLILALTLLFV) threads the bilayer. The DAC domain maps to 29–185 (NKRTRSFVIR…RGVIKTLSSN (157 aa)).

The protein belongs to the adenylate cyclase family. DacB/CdaS subfamily. Probably oligomerizes.

Its subcellular location is the cell membrane. It carries out the reaction 2 ATP = 3',3'-c-di-AMP + 2 diphosphate. Functionally, catalyzes the condensation of 2 ATP molecules into cyclic di-AMP (c-di-AMP), a second messenger used to regulate differing processes in different bacteria. The protein is Diadenylate cyclase of Mycoplasma pneumoniae (strain ATCC 29342 / M129 / Subtype 1) (Mycoplasmoides pneumoniae).